A 421-amino-acid chain; its full sequence is Glutamate-1-semialdehyde 2,1-aminomutase (421 aa).

An N6-(pyridoxal phosphate)lysine modification is found at K261.

This sequence belongs to the class-III pyridoxal-phosphate-dependent aminotransferase family. HemL subfamily. Pyridoxal 5'-phosphate serves as cofactor.

It is found in the cytoplasm. It carries out the reaction (S)-4-amino-5-oxopentanoate = 5-aminolevulinate. It functions in the pathway porphyrin-containing compound metabolism; protoporphyrin-IX biosynthesis; 5-aminolevulinate from L-glutamyl-tRNA(Glu): step 2/2. This chain is Glutamate-1-semialdehyde 2,1-aminomutase (hemL), found in Thermoplasma acidophilum (strain ATCC 25905 / DSM 1728 / JCM 9062 / NBRC 15155 / AMRC-C165).